The sequence spans 235 residues: Putative N-acetylmannosamine-6-phosphate 2-epimerase (235 aa).

Belongs to the NanE family.

It catalyses the reaction an N-acyl-D-glucosamine 6-phosphate = an N-acyl-D-mannosamine 6-phosphate. The protein operates within amino-sugar metabolism; N-acetylneuraminate degradation; D-fructose 6-phosphate from N-acetylneuraminate: step 3/5. Its function is as follows. Converts N-acetylmannosamine-6-phosphate (ManNAc-6-P) to N-acetylglucosamine-6-phosphate (GlcNAc-6-P). In Enterobacter sp. (strain 638), this protein is Putative N-acetylmannosamine-6-phosphate 2-epimerase.